Here is a 287-residue protein sequence, read N- to C-terminus: Phycobilisome 32.1 kDa linker polypeptide, phycocyanin-associated, rod (287 aa).

Residues Ala-2–Arg-180 enclose the PBS-linker domain. A CpcD-like domain is found at Gly-235 to Ala-287.

This sequence belongs to the phycobilisome linker protein family.

It localises to the cellular thylakoid membrane. Rod linker protein, associated with phycocyanin. Linker polypeptides determine the state of aggregation and the location of the disk-shaped phycobiliprotein units within the phycobilisome and modulate their spectroscopic properties in order to mediate a directed and optimal energy transfer. This is Phycobilisome 32.1 kDa linker polypeptide, phycocyanin-associated, rod (cpcC) from Thermosynechococcus vestitus (strain NIES-2133 / IAM M-273 / BP-1).